We begin with the raw amino-acid sequence, 375 residues long: Alcohol dehydrogenase 1A (375 aa).

Ser-2 carries the N-acetylserine modification. Ser-23 carries the post-translational modification Phosphoserine. Residue Cys-47 participates in Zn(2+) binding. Position 48 to 52 (48 to 52) interacts with NAD(+); it reads GTDDH. Residues His-68, Cys-98, Cys-101, Cys-104, Cys-112, and Cys-175 each coordinate Zn(2+). Residues 200–205, Asp-224, Lys-229, Ile-270, 293–295, 318–320, and Arg-370 each bind NAD(+); these read GLGGVG, VGV, and AIL.

It belongs to the zinc-containing alcohol dehydrogenase family. In terms of assembly, dimer of identical or heterodimer of closely related subunits alpha, beta, or gamma that are encoded by genes ADH1A, ADH1B, and ADH1C, respectively. The cofactor is Zn(2+).

Its subcellular location is the cytoplasm. It carries out the reaction a primary alcohol + NAD(+) = an aldehyde + NADH + H(+). The enzyme catalyses a secondary alcohol + NAD(+) = a ketone + NADH + H(+). It catalyses the reaction butan-1-ol + NAD(+) = butanal + NADH + H(+). The catalysed reaction is 1-propanol + NAD(+) = propanal + NADH + H(+). Functionally, alcohol dehydrogenase. Oxidizes primary as well as secondary alcohols. Ethanol is a very poor substrate. The protein is Alcohol dehydrogenase 1A (ADH1A) of Homo sapiens (Human).